The sequence spans 255 residues: Reticulon-like protein B3 (255 aa).

A compositionally biased stretch (basic and acidic residues) spans 1 to 25 (MAEEHKHEESIMEKISEKIHGHDDS). The tract at residues 1 to 38 (MAEEHKHEESIMEKISEKIHGHDDSSSSSSDSDDDKNS) is disordered. The residue at position 2 (Ala-2) is an N-acetylalanine. In terms of domain architecture, Reticulon spans 64 to 255 (PADIFLWRNK…GAFAFIKKKD (192 aa)). Transmembrane regions (helical) follow at residues 75–95 (VSGG…LLEY), 97–117 (LLTL…LWSS), and 186–206 (CNFL…PVLY).

The protein resides in the endoplasmic reticulum membrane. It is found in the vacuole membrane. The chain is Reticulon-like protein B3 (RTNLB3) from Arabidopsis thaliana (Mouse-ear cress).